The chain runs to 198 residues: Superoxide dismutase [Fe] (198 aa).

Residues H27, H74, D158, and H162 each coordinate Fe cation.

Belongs to the iron/manganese superoxide dismutase family. As to quaternary structure, homodimer. It depends on Fe cation as a cofactor.

The protein resides in the cytoplasm. The enzyme catalyses 2 superoxide + 2 H(+) = H2O2 + O2. Its function is as follows. Destroys superoxide anion radicals which are normally produced within the cells and which are toxic to biological systems. The sequence is that of Superoxide dismutase [Fe] (SODB) from Plasmodium malariae.